Here is a 547-residue protein sequence, read N- to C-terminus: Putative nitric oxide synthase (547 aa).

Low complexity predominate over residues Gln24–Thr40. Disordered stretches follow at residues Gln24 to Asp57 and Val72 to Leu91. Positions Arg81–Leu91 are enriched in basic residues. The 177-residue stretch at Ala167 to His343 folds into the CP-type G domain.

It belongs to the TRAFAC class YlqF/YawG GTPase family. NOA1 subfamily.

It carries out the reaction 2 L-arginine + 3 NADPH + 4 O2 + H(+) = 2 L-citrulline + 2 nitric oxide + 3 NADP(+) + 4 H2O. Produces nitric oxide (NO) which is a messenger molecule involved in hormonal signaling and defense responses in plant. The protein is Putative nitric oxide synthase of Oryza sativa subsp. japonica (Rice).